The following is a 248-amino-acid chain: MAGHNKWSKVKRLKAVTDARKGKVFSRLSRDITLAAKAGGGDPNGNARLRTLLLKARDANMPADNVDRAVKKGTGELPGVVFEEITYEGYGPGGVAFIVKVTTDNKQRAAQEIRSVFLRWGGNLATTGAVSFQFLHAGQFLIPGAQISEDALMEVALDAGADDVITSEQGYEVRCNIHAFDKVAQALDQKGLKPDSAMIAYLPTTTVPVTDPQLAQSITRLHDALDELDDVQDVFSNDEIDESILPAS.

Belongs to the TACO1 family.

It is found in the cytoplasm. The polypeptide is Probable transcriptional regulatory protein Oter_1471 (Opitutus terrae (strain DSM 11246 / JCM 15787 / PB90-1)).